The sequence spans 271 residues: Phosphatidylglycerol--prolipoprotein diacylglyceryl transferase (271 aa).

3 consecutive transmembrane segments (helical) span residues 17 to 37 (LAIHWYGLTYLAAFGLFFFLA), 63 to 83 (ILFLGVMGVVIGGRLGYCLFY), and 95 to 115 (IFAVWQGGMSFHGGMLGVLVS). Residue R146 participates in a 1,2-diacyl-sn-glycero-3-phospho-(1'-sn-glycerol) binding. The next 3 helical transmembrane spans lie at 182–202 (SQVYQFLMEGLLLFVLLWLYA), 209–229 (GQVSGAFLVGYGVFRFIAEFF), and 243–263 (MSMGQWLCVPMIAAGIWLWIW).

It belongs to the Lgt family.

The protein localises to the cell inner membrane. It catalyses the reaction L-cysteinyl-[prolipoprotein] + a 1,2-diacyl-sn-glycero-3-phospho-(1'-sn-glycerol) = an S-1,2-diacyl-sn-glyceryl-L-cysteinyl-[prolipoprotein] + sn-glycerol 1-phosphate + H(+). Its pathway is protein modification; lipoprotein biosynthesis (diacylglyceryl transfer). Its function is as follows. Catalyzes the transfer of the diacylglyceryl group from phosphatidylglycerol to the sulfhydryl group of the N-terminal cysteine of a prolipoprotein, the first step in the formation of mature lipoproteins. The sequence is that of Phosphatidylglycerol--prolipoprotein diacylglyceryl transferase from Polaromonas naphthalenivorans (strain CJ2).